A 278-amino-acid chain; its full sequence is Single-strand selective monofunctional uracil-DNA glycosylase (278 aa).

Substrate contacts are provided by Met84, Phe98, and Asn163. Positions 173 to 187 (SGRNLTPADLPAKHR) are DNA-binding. Residue His239 participates in substrate binding.

The protein belongs to the uracil-DNA glycosylase (UDG) superfamily. SMUG1 family.

The protein resides in the nucleus. In terms of biological role, recognizes base lesions in the genome and initiates base excision DNA repair. Acts as a monofunctional DNA glycosylase specific for uracil (U) residues in DNA with a preference for single-stranded DNA substrates. The activity is greater toward mismatches (U/G) compared to matches (U/A). Excises uracil (U), 5-formyluracil (fU) and uracil derivatives bearing an oxidized group at C5 [5-hydroxyuracil (hoU) and 5-hydroxymethyluracil (hmU)] in ssDNA and dsDNA, but not analogous cytosine derivatives (5-hydroxycytosine and 5-formylcytosine), nor other oxidized bases. The activity is damage-specific and salt-dependent. The substrate preference is the following: ssDNA &gt; dsDNA (G pair) = dsDNA (A pair) at low salt concentration, and dsDNA (G pair) &gt; dsDNA (A pair) &gt; ssDNA at high salt concentration. This is Single-strand selective monofunctional uracil-DNA glycosylase (Smug1) from Rattus norvegicus (Rat).